Consider the following 221-residue polypeptide: Cysteine-rich venom protein (221 aa).

Gly1 is a signal peptide. Residues 21–148 enclose the SCP domain; it reads DLHNSLRRSV…EYKYFYVCQY (128 aa). 8 cysteine pairs are disulfide-bonded: Cys57–Cys135, Cys74–Cys149, Cys130–Cys146, Cys168–Cys175, Cys171–Cys180, Cys184–Cys216, Cys193–Cys210, and Cys201–Cys214. Positions 184–216 constitute a ShKT domain; sequence CTHEDKFTNCKDLVKQGCNNNYLKTNCPASCSC.

The protein belongs to the CRISP family. As to expression, expressed by the venom gland.

Its subcellular location is the secreted. In terms of biological role, blocks contraction of smooth muscle elicited by high potassium-induced depolarization, but does not block caffeine-stimulated contraction. May target voltage-gated calcium channels in smooth muscle. This chain is Cysteine-rich venom protein, found in Vipera nikolskii (Nikolsky's adder).